Reading from the N-terminus, the 2898-residue chain is Papilin (2898 aa).

The N-terminal stretch at 1–26 is a signal peptide; sequence MDLSRRLCSTALVAFIVLASIHDSQS. The tract at residues 43-67 is disordered; sequence LPESSVTPGGEGNDPDEWTPWSSPS. Positions 57–111 constitute a TSP type-1 1 domain; that stretch reads PDEWTPWSSPSDCSRTCGGGVSYQTRECLRRDDRGEAVCSGGSRRYFSCNTQDCP. Disulfide bonds link C69–C105, C73–C110, and C84–C95. N-linked (GlcNAc...) asparagine glycosylation is found at N258 and N319. Positions 338–397 constitute a TSP type-1 2 domain; it reads DTHTWTHHQFNACSASCGGGSQSRKVTCNNRITLAEVNPSLCDQKSKPVEEQACGTEPCA. N419 is a glycosylation site (N-linked (GlcNAc...) asparagine). 4 consecutive TSP type-1 domains span residues 461–521, 522–575, 576–633, and 639–694; these read NCPK…TPCE, GVDW…KSPK, CEAQ…QDCE, and CPGE…EACT. 3 cysteine pairs are disulfide-bonded: C462–C504, C473–C515, and C477–C520. N-linked (GlcNAc...) asparagine glycosylation is present at N669. Disordered stretches follow at residues 699–1252 and 1323–1367; these read LPLT…CAKS and GEND…PDTK. Acidic residues-rich tracts occupy residues 708-720 and 727-738; these read IEDD…EDGI and LSDDEKSEDVID. Over residues 768 to 788 the composition is skewed to polar residues; it reads STGTTFEGSGYDSESTTDSGI. Positions 801–879 are enriched in low complexity; the sequence is EASTDLSSST…ASASESTDVS (79 aa). N889, N914, N917, N950, and N1064 each carry an N-linked (GlcNAc...) asparagine glycan. A compositionally biased stretch (low complexity) spans 890–1053; sequence ASDSTPESST…SDNTDITTDG (164 aa). A compositionally biased stretch (polar residues) spans 1064–1073; the sequence is NASTEGSTEG. 2 stretches are compositionally biased toward low complexity: residues 1076 to 1091 and 1104 to 1215; these read EDTT…TEST and STVE…IWST. Basic residues predominate over residues 1237–1248; sequence SKPRKCKPKKST. Low complexity predominate over residues 1330-1351; the sequence is PETTTVPPTTTTEETQPETTTE. 2 N-linked (GlcNAc...) asparagine glycosylation sites follow: N1489 and N1623. 15 cysteine pairs are disulfide-bonded: C1612/C1662, C1621/C1645, C1637/C1658, C1671/C1721, C1680/C1704, C1696/C1717, C1730/C1780, C1739/C1763, C1755/C1776, C1790/C1840, C1799/C1823, C1815/C1836, C1849/C1899, C1858/C1882, and C1874/C1895. 5 consecutive BPTI/Kunitz inhibitor domains span residues 1612 to 1662, 1671 to 1721, 1730 to 1780, 1790 to 1840, and 1849 to 1899; these read CGLP…KDTC, CLLP…QGTC, CEQP…NYNC, CALP…EDHC, and CEIP…LARC. N1750 is a glycosylation site (N-linked (GlcNAc...) asparagine). The tract at residues 1902–1928 is disordered; sequence KPEPTTTTPATRPQPSRQDVCDEEPAP. The segment covering 1905 to 1916 has biased composition (low complexity); it reads PTTTTPATRPQP. Intrachain disulfides connect C1922/C1972, C1931/C1955, and C1947/C1968. Positions 1922 to 1972 constitute a BPTI/Kunitz inhibitor 6 domain; sequence CDEEPAPGECSTWVLKWHFDRKIGACRQFYYGNCGGNGNRFETENDCQQRC. Residues 1972–2004 form a disordered region; sequence CLSQEPPAPTPPRAPAPTRQPDPAPTVAQCSQP. Pro residues predominate over residues 1977–1995; sequence PPAPTPPRAPAPTRQPDPA. Cystine bridges form between C2001-C2051, C2010-C2034, C2026-C2047, C2071-C2121, C2080-C2104, C2096-C2117, C2128-C2178, C2137-C2161, C2153-C2174, C2194-C2244, C2203-C2227, C2219-C2240, C2253-C2303, C2262-C2286, C2278-C2299, C2318-C2371, C2327-C2354, and C2346-C2367. BPTI/Kunitz inhibitor domains follow at residues 2001–2051, 2071–2121, 2128–2178, 2194–2244, 2253–2303, and 2318–2371; these read CSQP…SARC, CFLA…QNEC, CALP…LNFC, CAEP…ERQC, CNEP…QTVC, and CLLP…TNQC. An N-linked (GlcNAc...) asparagine glycan is attached at N2020. An N-linked (GlcNAc...) asparagine glycan is attached at N2083. N2205 carries N-linked (GlcNAc...) asparagine glycosylation. In terms of domain architecture, WAP spans 2452–2498; it reads DIYKPGECPALSANASGCARECYTDADCRGDNKCCSDGCGQLCVHPA. N2465, N2552, and N2625 each carry an N-linked (GlcNAc...) asparagine glycan. Ig-like C2-type domains are found at residues 2523 to 2607, 2617 to 2697, and 2749 to 2840; these read PKEA…REVA, PAYI…RPVS, and PTVN…ANVS. The cysteines at positions 2543 and 2592 are disulfide-linked. Cystine bridges form between C2640–C2687 and C2775–C2824. N-linked (GlcNAc...) asparagine glycosylation is found at N2784 and N2838. Residues 2847 to 2886 enclose the PLAC domain; it reads VSPECVDNPYFANCKLIVKGRYCSNPYYTQFCCRSCTLAG.

It belongs to the papilin family. Homooligomer; disulfide-linked. In terms of processing, N-glycosylated. Post-translationally, sulfated. During embryogenesis it first appears in the extracellular matrix during gastrulation and early mesoderm development at sites where basement membranes do not subsequently form. Later, migrating hemocytes prominently produce it together with other ECM components, in basement membranes that underlie epithelia and envelop muscles and emerging organs. At various life stages, it can be synthesized by other cells, such as those of the fat body, and it also occurs in a few, circumscribed regions of relatively amorphous ECM. Isoform E is specifically expressed in ECM of heart and proventriculus. Isoform C is a major component of transitory ECM deposit in the early embryo. Isoform F is a major component of the basement membrane during embryogenesis.

The protein resides in the secreted. Its subcellular location is the extracellular space. It localises to the extracellular matrix. It is found in the basement membrane. Its function is as follows. Essential extracellular matrix (ECM) protein that influences cell rearrangements. May act by modulating metalloproteinases action during organogenesis. Able to non-competitively inhibit procollagen N-proteinase, an ADAMTS metalloproteinase. The protein is Papilin (Ppn) of Drosophila melanogaster (Fruit fly).